Here is a 326-residue protein sequence, read N- to C-terminus: B3 domain-containing protein At5g60130 (326 aa).

A DNA-binding region (TF-B3) is located at residues 12–110 (PKFFKVYLPD…CFHFCIYEHR (99 aa)). Residues 124 to 222 (EEIKVESDSD…DEDERQYLDD (99 aa)) form a disordered region. Residues 143-199 (LSLDEDDDDSDYNCGEDNDSDDYADEAAVEKDDNDADDEDVDNVADDVPVEDDDYVE) are compositionally biased toward acidic residues.

The protein localises to the nucleus. This is B3 domain-containing protein At5g60130 from Arabidopsis thaliana (Mouse-ear cress).